A 142-amino-acid chain; its full sequence is Hemoglobin subunit alpha (142 aa).

Residues 2–142 form the Globin domain; sequence VLSPADKTNV…VSTVLTSKYR (141 aa). Serine 4 carries the phosphoserine modification. Lysine 8 bears the N6-succinyllysine mark. A Phosphothreonine modification is found at threonine 9. Residue lysine 12 is modified to N6-succinyllysine. Lysine 17 bears the N6-acetyllysine; alternate mark. At lysine 17 the chain carries N6-succinyllysine; alternate. Tyrosine 25 is modified (phosphotyrosine). Serine 36 is modified (phosphoserine). Lysine 41 is subject to N6-succinyllysine. Phosphoserine is present on serine 50. An O2-binding site is contributed by histidine 59. Histidine 88 contacts heme b. Serine 103 carries the post-translational modification Phosphoserine. Residue threonine 109 is modified to Phosphothreonine. Position 125 is a phosphoserine (serine 125). Phosphothreonine occurs at positions 135 and 138. At serine 139 the chain carries Phosphoserine.

The protein belongs to the globin family. Heterotetramer of two alpha chains and two beta chains. As to expression, red blood cells.

Its function is as follows. Involved in oxygen transport from the lung to the various peripheral tissues. In terms of biological role, hemopressin acts as an antagonist peptide of the cannabinoid receptor CNR1. Hemopressin-binding efficiently blocks cannabinoid receptor CNR1 and subsequent signaling. The chain is Hemoglobin subunit alpha (HBA) from Ailurus fulgens (Himalayan red panda).